Here is a 602-residue protein sequence, read N- to C-terminus: Beta-(1--&gt;2)glucan export ATP-binding/permease protein NdvA (602 aa).

The region spanning 21–311 (GWVLAGANLL…VVGFVNSVFM (291 aa)) is the ABC transmembrane type-1 domain. Transmembrane regions (helical) follow at residues 22–42 (WVLA…PVLF), 68–88 (LLLA…AVAL), 146–166 (EHFA…YINW), 167–187 (RLAL…TLVV), 238–258 (LLAM…ITRA), and 285–305 (IVMF…VVGF). The ABC transporter domain maps to 345–579 (VEFDNVSFSY…RGYFAELAHA (235 aa)). Residue 378–385 (GATGAGKS) participates in ATP binding.

Belongs to the ABC transporter superfamily. Beta-(1--&gt;2)glucan exporter (TC 3.A.1.108.1) family. In terms of assembly, homodimer.

Its subcellular location is the cell inner membrane. The catalysed reaction is [(1-&gt;2)-beta-D-glucosyl](n)(in) + ATP + H2O = [(1-&gt;2)-beta-D-glucosyl](n)(out) + ADP + phosphate + H(+). Its function is as follows. Involved in Beta-(1--&gt;2)glucan export. Transmembrane domains (TMD) form a pore in the inner membrane and the ATP-binding domain (NBD) is responsible for energy generation. The protein is Beta-(1--&gt;2)glucan export ATP-binding/permease protein NdvA of Rhodopseudomonas palustris (strain BisA53).